The following is a 174-amino-acid chain: Methylated-DNA--protein-cysteine methyltransferase (174 aa).

The active-site Nucleophile; methyl group acceptor is cysteine 141.

The protein belongs to the MGMT family.

The protein localises to the cytoplasm. The catalysed reaction is a 6-O-methyl-2'-deoxyguanosine in DNA + L-cysteinyl-[protein] = S-methyl-L-cysteinyl-[protein] + a 2'-deoxyguanosine in DNA. It catalyses the reaction a 4-O-methyl-thymidine in DNA + L-cysteinyl-[protein] = a thymidine in DNA + S-methyl-L-cysteinyl-[protein]. Functionally, involved in the cellular defense against the biological effects of O6-methylguanine (O6-MeG) and O4-methylthymine (O4-MeT) in DNA. Repairs the methylated nucleobase in DNA by stoichiometrically transferring the methyl group to a cysteine residue in the enzyme. This is a suicide reaction: the enzyme is irreversibly inactivated. The sequence is that of Methylated-DNA--protein-cysteine methyltransferase from Thermococcus kodakarensis (strain ATCC BAA-918 / JCM 12380 / KOD1) (Pyrococcus kodakaraensis (strain KOD1)).